The following is a 100-amino-acid chain: uncharacterized protein (100 aa).

The protein resides in the mitochondrion. This is an uncharacterized protein from Arabidopsis thaliana (Mouse-ear cress).